Consider the following 266-residue polypeptide: GTP cyclohydrolase III (266 aa).

This sequence belongs to the archaeal-type GTP cyclohydrolase family.

The catalysed reaction is GTP + 3 H2O = 2-amino-5-formylamino-6-(5-phospho-D-ribosylamino)pyrimidin-4(3H)-one + 2 phosphate + 2 H(+). Catalyzes the formation of 2-amino-5-formylamino-6-ribofuranosylamino-4(3H)-pyrimidinone ribonucleotide monophosphate and inorganic phosphate from GTP. Also has an independent pyrophosphate phosphohydrolase activity. The protein is GTP cyclohydrolase III of Methanococcus vannielii (strain ATCC 35089 / DSM 1224 / JCM 13029 / OCM 148 / SB).